The primary structure comprises 319 residues: Ribonuclease Z (319 aa).

Residues H62, H64, D66, H67, H139, D209, and H268 each contribute to the Zn(2+) site. D66 functions as the Proton acceptor in the catalytic mechanism.

The protein belongs to the RNase Z family. Homodimer. Zn(2+) is required as a cofactor.

The enzyme catalyses Endonucleolytic cleavage of RNA, removing extra 3' nucleotides from tRNA precursor, generating 3' termini of tRNAs. A 3'-hydroxy group is left at the tRNA terminus and a 5'-phosphoryl group is left at the trailer molecule.. In terms of biological role, zinc phosphodiesterase, which displays some tRNA 3'-processing endonuclease activity. Probably involved in tRNA maturation, by removing a 3'-trailer from precursor tRNA. The chain is Ribonuclease Z from Pseudomonas putida (strain ATCC 47054 / DSM 6125 / CFBP 8728 / NCIMB 11950 / KT2440).